The following is a 194-amino-acid chain: Orotate phosphoribosyltransferase (194 aa).

Residues Arg-102, Lys-103, Lys-106, His-108, and 129–137 each bind 5-phospho-alpha-D-ribose 1-diphosphate; that span reads EDVVTTGGS. Orotate contacts are provided by Thr-133 and Arg-161.

This sequence belongs to the purine/pyrimidine phosphoribosyltransferase family. PyrE subfamily. As to quaternary structure, homodimer. Requires Mg(2+) as cofactor.

The catalysed reaction is orotidine 5'-phosphate + diphosphate = orotate + 5-phospho-alpha-D-ribose 1-diphosphate. The protein operates within pyrimidine metabolism; UMP biosynthesis via de novo pathway; UMP from orotate: step 1/2. Catalyzes the transfer of a ribosyl phosphate group from 5-phosphoribose 1-diphosphate to orotate, leading to the formation of orotidine monophosphate (OMP). This is Orotate phosphoribosyltransferase from Synechococcus sp. (strain CC9902).